The chain runs to 78 residues: Beta-defensin 105A (78 aa).

The N-terminal stretch at 1 to 27 is a signal peptide; it reads MALIRKTFYFVFAVFFILVQQPSGCQA. 3 disulfide bridges follow: Cys-43-Cys-74, Cys-53-Cys-67, and Cys-57-Cys-73.

Belongs to the beta-defensin family.

Its subcellular location is the secreted. Has antimicrobial activity. This is Beta-defensin 105A (DEFB105A) from Macaca fascicularis (Crab-eating macaque).